The following is a 337-amino-acid chain: Ferredoxin--NADP reductase (337 aa).

FAD contacts are provided by Asp35, Gln43, Tyr48, Ala88, Phe122, Asp289, and Thr330.

The protein belongs to the ferredoxin--NADP reductase type 2 family. In terms of assembly, homodimer. FAD serves as cofactor.

The catalysed reaction is 2 reduced [2Fe-2S]-[ferredoxin] + NADP(+) + H(+) = 2 oxidized [2Fe-2S]-[ferredoxin] + NADPH. The chain is Ferredoxin--NADP reductase from Ehrlichia ruminantium (strain Gardel).